Consider the following 2633-residue polypeptide: Non-reducing polyketide synthase sor2 (2633 aa).

The N-terminal acylcarrier protein transacylase domain (SAT) stretch occupies residues 67–237 (VSNAQKLAEW…TTSTRTVAAL (171 aa)). The Nucleophile; for transacylase activity role is filled by C140. H258 functions as the Proton donor/acceptor; for transacylase activity in the catalytic mechanism. The region spanning 389-814 (ENDIAVIGMA…GSNASVIIKQ (426 aa)) is the Ketosynthase family 3 (KS3) domain. Active-site for beta-ketoacyl synthase activity residues include C561, H696, and H737. The tract at residues 928–1239 (CFGGQVSTFV…SKASSQLSDV (312 aa)) is malonyl-CoA:ACP transacylase (MAT) domain. The segment at 1307 to 1437 (PQPVGLYTLL…GQLHFQASDD (131 aa)) is N-terminal hotdog fold. Residues 1307-1627 (PQPVGLYTLL…YAPVSLDQLF (321 aa)) enclose the PKS/mFAS DH domain. Positions 1338–1509 (MSDHAIGKAQ…SNESAGRLVR (172 aa)) are product template (PT) domain. Residues 1464–1627 (GRSDEVIQGQ…YAPVSLDQLF (164 aa)) form a C-terminal hotdog fold region. The Carrier domain occupies 1684 to 1758 (EELWLRLRPV…GILKFLQSTL (75 aa)). Residue S1718 is modified to O-(pantetheine 4'-phosphoryl)serine. The tract at residues 1762–1792 (DVHDSSETMSTVSSDGNVHSPPTSGSEMASP) is disordered. Over residues 1768–1790 (ETMSTVSSDGNVHSPPTSGSEMA) the composition is skewed to polar residues. The tract at residues 1982–2166 (FELMADFLTR…ASGFKHVRWT (185 aa)) is methyltransferase domain. Residues 2253–2495 (VTGATGSLGS…TLRALPDVDG (243 aa)) are NADPH-binding (R) domain.

Pantetheine 4'-phosphate serves as cofactor.

The protein operates within secondary metabolite biosynthesis. Functionally, non-reducing polyketide synthase; part of the SOR gene cluster that mediates the biosynthesis of sorbicillinoids, a diverse group of yellow secondary metabolites that restrict growth of competing pathogenic fungi but not of bacteria. Sorbicillinoids biosynthesis requires the action of two PKSs. The SOR cluster is required for the production of trichodimerol and dihydrotrichotetronin, with sor2 being sufficient for production of trichodimerol, but not dihydrotrichotetronin in the light. Sor1 iteratively combines three acetyl units and the growing chain is modified by the ketoacyl reductase subunit, and optional by the enoyl reductase subunit in the second cycle. The polyketide is then handed over to the PKS sor2, which adds three more acetyl units, and two methyl groups. Sor2 releases an aldehyde, which undergoes spontaneous cyclization resulting in the formation of sorbicillin or 2',3'-dihydrosorbicillin. The monooxygenase sor5 oxidizes sorbicillin and 2',3'-dihydrosorbicillin to 2',3'-dihydrosorbicillinol and sorbicillinol, respectively. The oxidoreductase sor8 further converts sorbicillinol into oxosorbicillinol. Sorbicillinol is the building block for the other sorbicillinoids such as disorbicillinol, bisvertinolon, dihydrobisvertinolone, and dihydrotrichotetronine. The protein is Non-reducing polyketide synthase sor2 of Hypocrea jecorina (strain QM6a) (Trichoderma reesei).